A 463-amino-acid polypeptide reads, in one-letter code: Probable multidrug resistance protein YoeA (463 aa).

The next 12 helical transmembrane spans lie at 24 to 44, 56 to 76, 106 to 126, 143 to 163, 177 to 197, 202 to 222, 256 to 276, 293 to 313, 330 to 350, 370 to 390, 397 to 417, and 427 to 447; these read LFLV…LVGM, VAAV…TIGI, FTFL…LDIL, ARIL…TTFL, IVST…MFGF, IYGS…VLMV, VPAS…ISFV, VASY…IFAA, VGIW…YVFS, LLMI…ISAT, VLWP…PVAF, and ILGV…LIYG.

This sequence belongs to the multi antimicrobial extrusion (MATE) (TC 2.A.66.1) family.

It is found in the cell membrane. This is Probable multidrug resistance protein YoeA (yoeA) from Bacillus subtilis (strain 168).